The primary structure comprises 336 residues: Ribosomal RNA small subunit methyltransferase C (336 aa).

It belongs to the methyltransferase superfamily. RsmC family. Monomer.

It localises to the cytoplasm. It carries out the reaction guanosine(1207) in 16S rRNA + S-adenosyl-L-methionine = N(2)-methylguanosine(1207) in 16S rRNA + S-adenosyl-L-homocysteine + H(+). In terms of biological role, specifically methylates the guanine in position 1207 of 16S rRNA in the 30S particle. The polypeptide is Ribosomal RNA small subunit methyltransferase C (Buchnera aphidicola subsp. Schizaphis graminum (strain Sg)).